The chain runs to 2435 residues: ATP-binding cassette sub-family A member 2 (2435 aa).

An N-linked (GlcNAc...) asparagine glycan is attached at Asn-14. 2 helical membrane-spanning segments follow: residues 22 to 42 and 54 to 74; these read PWVL…LLGL and AFYT…QSLC. 3 N-linked (GlcNAc...) asparagine glycosylation sites follow: Asn-89, Asn-168, and Asn-173. Gln-271 is modified (N5-methylglutamine). N-linked (GlcNAc...) asparagine glycosylation is found at Asn-305, Asn-368, Asn-379, Asn-420, Asn-432, Asn-476, Asn-484, Asn-494, Asn-530, Asn-544, Asn-590, Asn-600, and Asn-628. Transmembrane regions (helical) follow at residues 699-719, 750-770, 782-802, 813-833, 857-877, and 893-913; these read FLFV…VYSV, VAWF…LTAI, VVII…FCFL, ASAC…YVAI, AFGL…GIQW, and LLAV…TWYI. Residues 990-1221 form the ABC transporter 1 domain; the sequence is VCVDKLTKVY…YGDGYRLTLV (232 aa). 1024-1031 contributes to the ATP binding site; that stretch reads GHNGAGKT. Disordered stretches follow at residues 1223 to 1243 and 1325 to 1357; these read RPAE…PGRA and DQSL…GHAG. Residues Ser-1238, Ser-1327, and Ser-1331 each carry the phosphoserine modification. The segment covering 1333–1342 has biased composition (basic and acidic residues); it reads ADVKESRKDV. Asn-1408 carries N-linked (GlcNAc...) asparagine glycosylation. The chain crosses the membrane as a helical span at residues 1456-1476; sequence ALFSQILLPAFFVCVAMTVAL. Residues Asn-1496, Asn-1549, and Asn-1557 are each glycosylated (N-linked (GlcNAc...) asparagine). A disordered region spans residues 1586-1610; that stretch reads SNFVPPPPSPAPSDSPASPDEDLQA. A compositionally biased stretch (pro residues) spans 1589–1598; it reads VPPPPSPAPS. N-linked (GlcNAc...) asparagine glycans are attached at residues Asn-1612, Asn-1677, and Asn-1775. 5 consecutive transmembrane segments (helical) span residues 1792–1812, 1841–1861, 1872–1892, 1905–1925, and 1991–2011; these read VVIA…FVVF, VWDM…LFVF, FPAV…IMYP, VFLI…TFLL, and GLVA…MCQY. The 236-residue stretch at 2050–2285 folds into the ABC transporter 2 domain; that stretch reads VKIENLTKVY…FGDGYMITVR (236 aa). The N-linked (GlcNAc...) asparagine glycan is linked to Asn-2054. An ATP-binding site is contributed by 2087–2094; it reads GVNGAGKT. Phosphothreonine is present on Thr-2412.

Belongs to the ABC transporter superfamily. ABCA family. Post-translationally, methylated at Gln-271 by N6AMT1. In terms of tissue distribution, highly expressed in the brain,peripheral blood leukocytes and ovary, whereas lower levels of expression is observed in kidney and liver. As to expression, weakly expressed in brain and highly in peripheral blood leukocytes.

It localises to the endosome membrane. Its subcellular location is the lysosome membrane. Its function is as follows. Probable lipid transporter that modulates cholesterol sequestration in the late endosome/lysosome by regulating the intracellular sphingolipid metabolism, in turn participates in cholesterol homeostasis. May alter the transbilayer distribution of ceramide in the intraluminal membrane lipid bilayer, favoring its retention in the outer leaflet that results in increased acid ceramidase activity in the late endosome/lysosome, facilitating ceramide deacylation to sphingosine leading to the sequestration of free cholesterol in lysosomes. In addition regulates amyloid-beta production either by activating a signaling pathway that regulates amyloid precursor protein transcription through the modulation of sphingolipid metabolism or through its role in gamma-secretase processing of APP. May play a role in myelin formation. In Homo sapiens (Human), this protein is ATP-binding cassette sub-family A member 2.